The following is a 214-amino-acid chain: 3,4-dihydroxy-2-butanone 4-phosphate synthase (214 aa).

Residues 37-38 (RE), D42, 150-154 (RRGHT), and E174 contribute to the D-ribulose 5-phosphate site. Mg(2+) is bound at residue E38. H153 lines the Mg(2+) pocket.

This sequence belongs to the DHBP synthase family. In terms of assembly, homodimer. Requires Mg(2+) as cofactor. The cofactor is Mn(2+).

The enzyme catalyses D-ribulose 5-phosphate = (2S)-2-hydroxy-3-oxobutyl phosphate + formate + H(+). It participates in cofactor biosynthesis; riboflavin biosynthesis; 2-hydroxy-3-oxobutyl phosphate from D-ribulose 5-phosphate: step 1/1. In terms of biological role, catalyzes the conversion of D-ribulose 5-phosphate to formate and 3,4-dihydroxy-2-butanone 4-phosphate. This chain is 3,4-dihydroxy-2-butanone 4-phosphate synthase, found in Histophilus somni (strain 2336) (Haemophilus somnus).